Here is a 298-residue protein sequence, read N- to C-terminus: Aclacinomycin methylesterase RdmC (298 aa).

Positions 24-277 (PALLLVMGGN…LAEIPGMGHA (254 aa)) constitute an AB hydrolase-1 domain. Catalysis depends on residues serine 102, aspartate 248, and histidine 276.

It belongs to the AB hydrolase superfamily. Hydrolase RdmC family. In terms of assembly, monomer.

It carries out the reaction aclacinomycin T + H2O = 15-demethylaclacinomycin T + methanol. It participates in antibiotic biosynthesis; aclacinomycin biosynthesis. Involved in the biosynthesis of the anthracycline aclacinomycin which is an aromatic polyketide antibiotic that exhibits high cytotoxicity and is widely applied in the chemotherapy of a variety of cancers. Catalyzes the removal of the methoxy group from the C-15 position of aclacinomycin T and A to yield 15-demethoxyaclacinomycin T and A, respectively. In Streptomyces purpurascens, this protein is Aclacinomycin methylesterase RdmC (rdmC).